Consider the following 337-residue polypeptide: o-succinylbenzoate synthase (337 aa).

Catalysis depends on Lys142, which acts as the Proton donor. 3 residues coordinate Mg(2+): Asp170, Glu199, and Asp222. Lys248 (proton acceptor) is an active-site residue.

The protein belongs to the mandelate racemase/muconate lactonizing enzyme family. MenC type 1 subfamily. The cofactor is a divalent metal cation.

It catalyses the reaction (1R,6R)-6-hydroxy-2-succinyl-cyclohexa-2,4-diene-1-carboxylate = 2-succinylbenzoate + H2O. The protein operates within quinol/quinone metabolism; 1,4-dihydroxy-2-naphthoate biosynthesis; 1,4-dihydroxy-2-naphthoate from chorismate: step 4/7. Its pathway is quinol/quinone metabolism; menaquinone biosynthesis. Functionally, converts 2-succinyl-6-hydroxy-2,4-cyclohexadiene-1-carboxylate (SHCHC) to 2-succinylbenzoate (OSB). The chain is o-succinylbenzoate synthase from Pasteurella multocida (strain Pm70).